Consider the following 384-residue polypeptide: Urotensin-2 receptor (384 aa).

Topologically, residues 1–54 are extracellular; sequence MALSPEPSSRFLVPATMGSAMPELPGAPNASLNSSLASPTEPNSLEDLVATGTI. Asn29 and Asn33 each carry an N-linked (GlcNAc...) asparagine glycan. A helical membrane pass occupies residues 55 to 77; the sequence is GVVLSAMGVVGMAGNVYTLTVMC. Topologically, residues 78-87 are cytoplasmic; the sequence is RFLHTSASMY. Residues 88–113 traverse the membrane as a helical segment; sequence VYVINLALADLLYLLSIPFIVATYVT. The Extracellular portion of the chain corresponds to 114 to 124; that stretch reads KRWHFGDVGCR. A disulfide bond links Cys123 and Cys199. The chain crosses the membrane as a helical span at residues 125-146; the sequence is VLFSLDFLTMHASIFTLTLMSR. At 147–167 the chain is on the cytoplasmic side; that stretch reads ERYAAVVRPLDTVQRSKGYRK. A helical membrane pass occupies residues 168-186; that stretch reads VLALGTWLLALLLALPMML. Residues 187–209 lie on the Extracellular side of the membrane; it reads AIRLVRRGHKSLCLPAWGQRTHR. A helical membrane pass occupies residues 210–232; it reads AYLTLLFGTSIVGPGVVIGLLYV. The Cytoplasmic segment spans residues 233 to 259; sequence RLARAYWLSQRSSFTQTRRLPNPRVLY. The helical transmembrane segment at 260-285 threads the bilayer; the sequence is LILGIVLLFWACFLPFWLWQLLAQYR. The Extracellular segment spans residues 286-299; it reads GAPPLAPRSARIVN. Residues 300 to 320 form a helical membrane-spanning segment; sequence YLTTCLTYGNSCVNPFLYTLL. The Cytoplasmic segment spans residues 321-384; it reads TKNYRDYRQR…SQAVPGSLCV (64 aa).

It belongs to the G-protein coupled receptor 1 family. In terms of tissue distribution, expressed in neural tissue, including sensory epithelia.

The protein resides in the cell membrane. High affinity receptor for urotensin-2 and urotensin-2B. The activity of this receptor is mediated by a G-protein that activate a phosphatidylinositol-calcium second messenger system. The chain is Urotensin-2 receptor (UTS2R) from Bos taurus (Bovine).